Reading from the N-terminus, the 447-residue chain is UPF0210 protein LAF_0976 (447 aa).

The protein belongs to the UPF0210 family. As to quaternary structure, homodimer.

The chain is UPF0210 protein LAF_0976 from Limosilactobacillus fermentum (strain NBRC 3956 / LMG 18251) (Lactobacillus fermentum).